Here is a 197-residue protein sequence, read N- to C-terminus: FMN-dependent NADH:quinone oxidoreductase (197 aa).

Ser10 is a binding site for FMN.

It belongs to the azoreductase type 1 family. As to quaternary structure, homodimer. The cofactor is FMN.

It carries out the reaction 2 a quinone + NADH + H(+) = 2 a 1,4-benzosemiquinone + NAD(+). It catalyses the reaction N,N-dimethyl-1,4-phenylenediamine + anthranilate + 2 NAD(+) = 2-(4-dimethylaminophenyl)diazenylbenzoate + 2 NADH + 2 H(+). Functionally, quinone reductase that provides resistance to thiol-specific stress caused by electrophilic quinones. Also exhibits azoreductase activity. Catalyzes the reductive cleavage of the azo bond in aromatic azo compounds to the corresponding amines. In Mycoplasma pneumoniae (strain ATCC 29342 / M129 / Subtype 1) (Mycoplasmoides pneumoniae), this protein is FMN-dependent NADH:quinone oxidoreductase.